A 72-amino-acid polypeptide reads, in one-letter code: Translation initiation factor IF-1 (72 aa).

The region spanning 1–72 (MAKEELLEFP…TKGRITYRFK (72 aa)) is the S1-like domain.

Belongs to the IF-1 family. In terms of assembly, component of the 30S ribosomal translation pre-initiation complex which assembles on the 30S ribosome in the order IF-2 and IF-3, IF-1 and N-formylmethionyl-tRNA(fMet); mRNA recruitment can occur at any time during PIC assembly.

The protein localises to the cytoplasm. Functionally, one of the essential components for the initiation of protein synthesis. Stabilizes the binding of IF-2 and IF-3 on the 30S subunit to which N-formylmethionyl-tRNA(fMet) subsequently binds. Helps modulate mRNA selection, yielding the 30S pre-initiation complex (PIC). Upon addition of the 50S ribosomal subunit IF-1, IF-2 and IF-3 are released leaving the mature 70S translation initiation complex. This is Translation initiation factor IF-1 from Maricaulis maris (strain MCS10) (Caulobacter maris).